We begin with the raw amino-acid sequence, 208 residues long: Ras-related protein Rab-6A (208 aa).

N-acetylserine is present on serine 2. Residues serine 23, valine 24, glycine 25, lysine 26, threonine 27, serine 28, aspartate 39, asparagine 40, tyrosine 42, and threonine 45 each contribute to the GTP site. Threonine 27 contributes to the Mg(2+) binding site. Residues 32–50 (RFMYDSFDNTYQATIGIDF) carry the Switch 1 motif. The Mg(2+) site is built by threonine 45 and aspartate 68. The Switch 2 motif lies at 69–88 (TAGQERFRSLIPSYIRDSTV). A GTP-binding site is contributed by glycine 71. O-AMP-tyrosine; by Legionella DrrA is present on tyrosine 82. Residues asparagine 126, lysine 127, aspartate 129, serine 156, alanine 157, and lysine 158 each contribute to the GTP site. Position 184 is a phosphoserine (serine 184). S-geranylgeranyl cysteine attachment occurs at residues cysteine 206 and cysteine 208. Cysteine 208 bears the Cysteine methyl ester mark.

Belongs to the small GTPase superfamily. Rab family. Interacts (GTP-bound) with DYNLRB1; the interaction is direct. Interacts with BICD1. Interacts with BICD2; the interaction is direct. Interacts (GTP-bound) with VPS13B. In terms of assembly, interacts with BICD1. Interacts (GDP-bound) with DYNLRB1; the interaction is direct. Interacts (GTP-bound) with VPS13B. As to quaternary structure, interacts with BICDL1; leads to its accumulation in the pericentrosomal region. Interacts with SCYL1BP1. Interacts with VSP52. Interacts with RABGAP1. Interacts with GCC2 (via its GRIP domain). Interacts with RAB6IP1 (via its RUN 1 domain). Interacts with TMF1. Interacts with CIMAP3. Interacts (GTP-bound) with APBA1/MINT1 isoform 2, also called Mint1_826, but not with isoform 1. Interacts with RIC1; the interaction is direct with a preference for RAB6A-GDP. Interacts with RGP1; the interaction is direct with a preference for RAB6A-GDP. (Microbial infection) Interacts with human cytomegalovirus protein UL32. It depends on Mg(2+) as a cofactor. In terms of processing, prenylated. As to expression, ubiquitous.

The protein localises to the golgi apparatus membrane. The protein resides in the cytoplasmic vesicle. It localises to the secretory vesicle. Its subcellular location is the acrosome membrane. The enzyme catalyses GTP + H2O = GDP + phosphate + H(+). Its activity is regulated as follows. Regulated by guanine nucleotide exchange factors (GEFs) which promote the exchange of bound GDP for free GTP. Regulated by GTPase activating proteins (GAPs) which increase the GTP hydrolysis activity. Inhibited by GDP dissociation inhibitors (GDIs). Functionally, the small GTPases Rab are key regulators of intracellular membrane trafficking, from the formation of transport vesicles to their fusion with membranes. Rabs cycle between an inactive GDP-bound form and an active GTP-bound form that is able to recruit to membranes different sets of downstream effectors directly responsible for vesicle formation, movement, tethering and fusion. RAB6A acts as a regulator of COPI-independent retrograde transport from the Golgi apparatus towards the endoplasmic reticulum (ER). Has a low GTPase activity. Recruits VPS13B to the Golgi membrane. Plays a role in neuron projection development. The polypeptide is Ras-related protein Rab-6A (Homo sapiens (Human)).